Here is a 524-residue protein sequence, read N- to C-terminus: Beta-glucosidase 22 (524 aa).

An N-terminal signal peptide occupies residues 1 to 24; that stretch reads MALQKFPLLGLLFLITIVVSSTIA. Gln55 is a binding site for a beta-D-glucoside. The N-linked (GlcNAc...) asparagine glycan is linked to Asn61. A beta-D-glucoside is bound by residues His158 and 203-204; that span reads NE. Glu204 acts as the Proton donor in catalysis. Cysteines 223 and 230 form a disulfide. A beta-D-glucoside contacts are provided by residues Tyr346, Glu418, Trp468, 475-476, and Phe484; that span reads EW. Residue Glu418 is the Nucleophile of the active site. A glycan (N-linked (GlcNAc...) asparagine) is linked at Asn494. The Prevents secretion from ER signature appears at 521–524; that stretch reads KDEL.

It belongs to the glycosyl hydrolase 1 family. Component of the PYK10 complex, at least composed of PYK10/BGLU23, BGLU21, BGLU22, JAL22, JAL23, PBP1/JAL30, PBP2/JAL31, JAL32, JAL33, JAL34, JAL35, GLL22 and GLL23. As to expression, expressed exclusively in roots.

It localises to the endoplasmic reticulum lumen. The enzyme catalyses Hydrolysis of terminal, non-reducing beta-D-glucosyl residues with release of beta-D-glucose.. Activated upon binding to PBP1 or PBP2. In terms of biological role, beta-D-glucosidase active on scopolin &gt;&gt; esculin &gt;&gt; 4-MU-glucoside. No activity with DIMBOA-glucoside, pNP-glucoside, oNP-glucoside and sinigrin as substrates. The polypeptide is Beta-glucosidase 22 (Arabidopsis thaliana (Mouse-ear cress)).